The following is a 530-amino-acid chain: Pre-mRNA-splicing factor PRP9 (530 aa).

The Matrin-type 1 zinc finger occupies 280–310 (IYCPFCSRWFKTSSVFESHLVGKIHKKNESK). The segment at 367–388 (DSTEKEGAEQVDGEQRDGQLQE) is disordered. Positions 368–388 (STEKEGAEQVDGEQRDGQLQE) are enriched in basic and acidic residues. The segment at 421–452 (YRCEICSNKVYNGRRTFERHFNEERHIYHLRC) adopts a Matrin-type 2 zinc-finger fold. The segment at 488-516 (AVPPKPNPSQLKVPTELELEEEDEEGNVM) is disordered. Positions 504–513 (LELEEEDEEG) are enriched in acidic residues.

This sequence belongs to the SF3A3 family. Belongs to the CWC complex (or CEF1-associated complex), a spliceosome sub-complex reminiscent of a late-stage spliceosome composed of the U2, U5 and U6 snRNAs and at least BUD13, BUD31, BRR2, CDC40, CEF1, CLF1, CUS1, CWC2, CWC15, CWC21, CWC22, CWC23, CWC24, CWC25, CWC27, ECM2, HSH155, IST3, ISY1, LEA1, MSL1, NTC20, PRP8, PRP9, PRP11, PRP19, PRP21, PRP22, PRP45, PRP46, SLU7, SMB1, SMD1, SMD2, SMD3, SMX2, SMX3, SNT309, SNU114, SPP2, SYF1, SYF2, RSE1 and YJU2.

It localises to the nucleus. Its function is as follows. mRNA splicing factors, PRP9, PRP11, and PRP21, are necessary for binding of the U2 snRNP to the pre-mRNA in an early step of spliceosome assembly. This is Pre-mRNA-splicing factor PRP9 (PRP9) from Saccharomyces cerevisiae (strain ATCC 204508 / S288c) (Baker's yeast).